The primary structure comprises 745 residues: MKEKSKNAGRTRREKENSEFYELAKLLPLPSAITSQSDKASIIRLTTSYLKMRIVFPEGLGESWGHVSRTTSLENVGRELGSHLLQTLDGFIFVVAPDGKILYISETASVHLGLSQEELTGNSIYEYIHPADHDEMTAVLTAHQPYHSHFVHEYEMERSFFLRMKCVLAKANAGLTCGGYKVIHCSGYLKIRQYSLDMSPFDGCYQNVGLVAVGHSLPPSAVTEIKLHSNMFMFRASLDMKLIFLDSRVAELTGYEPQDLIEKTLYHHVHSCDTFHLRCAHHLLLVKGQVTTKYYRFLAKQGGWVWVQSYATIVHNSRSSRPHCIVSVNYVLTDTEYKGLQLSLDQAASTKPSFTYNSPSNPVTENRRVGKSRVSRTKTKTRLSPYSQYPGFPTDRSESDQDSPWGGSPLTDSASPQLLEQCEGIESSCVYRQFSDPRSLCYGLPLTEDHHTSNELYSHPHSESCERGCCKAGRYFLGTPQPGREAWWGAARSVLPLPKSSPENGDSFEGVSPHIASIHSLQVRGHWDEDSAVSSAPDGGSASDSGDRFRADQCRSSPQEPSKIETLIRATQQMIKEEESRLQLRKLPTDVPLEPTNSLAKSFHSTDFPQSAMQSVVCRGPAQVISPAPSPVPLSRLSSPLPDRLSKGKDFLQNELSSSQLPLTGTCAVSPTPALYSLHPRQYLEKHAAYSLTSYALEHLYEADTFRGYSLGCSGSSHYDMTTHLRKAEQAPGHKGTSVIITNGS.

Residues 1–53 enclose the bHLH domain; sequence MKEKSKNAGRTRREKENSEFYELAKLLPLPSAITSQSDKASIIRLTTSYLKMR. PAS domains are found at residues 77–147 and 218–288; these read GREL…QPYH and PPSA…LVKG. Positions 336–745 constitute a Single-minded C-terminal domain; that stretch reads EYKGLQLSLD…GTSVIITNGS (410 aa). Polar residues predominate over residues 350–364; that stretch reads TKPSFTYNSPSNPVT. Disordered stretches follow at residues 350–413 and 529–563; these read TKPS…LTDS and EDSA…EPSK. The Nuclear localization signal motif lies at 368–387; the sequence is RVGKSRVSRTKTKTRLSPYS. Over residues 369 to 381 the composition is skewed to basic residues; the sequence is VGKSRVSRTKTKT. Low complexity predominate over residues 532 to 544; sequence AVSSAPDGGSASD.

Efficient DNA binding requires dimerization with another bHLH protein. Heterodimer of sim1a and arnt. In terms of tissue distribution, expressed in embryonic forebrain at the eleven somite stage. Detected in brain throughout embryonic development.

The protein resides in the nucleus. Its function is as follows. Transcriptional factor that may have pleiotropic effects during embryogenesis and in the adult. The sequence is that of Single-minded homolog 1-A (sim1a) from Danio rerio (Zebrafish).